We begin with the raw amino-acid sequence, 591 residues long: Probable anion transporter 4, chloroplastic (591 aa).

Residues 1–38 (MAMGAVLSSRTFASPLSSSGKQHPPQNNKCTCSSPPTR) form a disordered region. The N-terminal 76 residues, 1–76 (MAMGAVLSSR…LSARFHQPVV (76 aa)), are a transit peptide targeting the chloroplast. The span at 8-36 (SSRTFASPLSSSGKQHPPQNNKCTCSSPP) shows a compositional bias: polar residues. 11 helical membrane-spanning segments follow: residues 184–204 (VVLLCFFSFLLCNMDRVNMSI), 220–240 (VGLIQSSFFWGYLLTQILGGI), 249–269 (VVLGFGVVWWSIATVLTPLAA), 271–291 (IGLPFLLVMRAFMGIGEGVAM), 313–333 (LVYSGMYLGSVTGLAFSPLLI), 336–356 (FGWPSVFYAFGSLGSVWFALW), 402–422 (VWALIVSHFCHNWGTFILLTW), 440–460 (LLCVLPWLTMAIFANIGGWIA), 475–495 (KIMQSIGFLGPALFLTLLSKV), 531–551 (AGVLLGLSNTAGVLAGVFGTA), and 565–585 (VFQVAVVLYIVGTVVWNVFST).

The protein belongs to the major facilitator superfamily. Sodium/anion cotransporter (TC 2.A.1.14) family.

Its subcellular location is the plastid. The protein resides in the chloroplast membrane. Its function is as follows. Probable anion transporter. The chain is Probable anion transporter 4, chloroplastic (PHT4;4) from Oryza sativa subsp. japonica (Rice).